A 148-amino-acid chain; its full sequence is NADPH-dependent 7-cyano-7-deazaguanine reductase (148 aa).

Cysteine 50 (thioimide intermediate) is an active-site residue. The Proton donor role is filled by aspartate 57. Substrate is bound by residues 72 to 74 (VES) and 91 to 92 (HE).

The protein belongs to the GTP cyclohydrolase I family. QueF type 1 subfamily.

The protein resides in the cytoplasm. It catalyses the reaction 7-aminomethyl-7-carbaguanine + 2 NADP(+) = 7-cyano-7-deazaguanine + 2 NADPH + 3 H(+). Its pathway is tRNA modification; tRNA-queuosine biosynthesis. Functionally, catalyzes the NADPH-dependent reduction of 7-cyano-7-deazaguanine (preQ0) to 7-aminomethyl-7-deazaguanine (preQ1). The chain is NADPH-dependent 7-cyano-7-deazaguanine reductase from Helicobacter pylori (strain J99 / ATCC 700824) (Campylobacter pylori J99).